The sequence spans 456 residues: Adenylosuccinate lyase (456 aa).

Residues 15 to 16, 90 to 92, and 122 to 123 contribute to the N(6)-(1,2-dicarboxyethyl)-AMP site; these read RY, NHD, and TS. H171 functions as the Proton donor/acceptor in the catalytic mechanism. Q248 contacts N(6)-(1,2-dicarboxyethyl)-AMP. Residue S296 is the Proton donor/acceptor of the active site. Residues S297, 302–304, N310, R336, and 341–345 each bind N(6)-(1,2-dicarboxyethyl)-AMP; these read KVN and STVLR.

The protein belongs to the lyase 1 family. Adenylosuccinate lyase subfamily. As to quaternary structure, homotetramer.

It carries out the reaction N(6)-(1,2-dicarboxyethyl)-AMP = fumarate + AMP. It catalyses the reaction (2S)-2-[5-amino-1-(5-phospho-beta-D-ribosyl)imidazole-4-carboxamido]succinate = 5-amino-1-(5-phospho-beta-D-ribosyl)imidazole-4-carboxamide + fumarate. The enzyme catalyses (2S)-2-amino-2'-deoxyadenylo-succinate = dZMP + fumarate. The protein operates within purine metabolism; AMP biosynthesis via de novo pathway; AMP from IMP: step 2/2. It functions in the pathway purine metabolism; IMP biosynthesis via de novo pathway; 5-amino-1-(5-phospho-D-ribosyl)imidazole-4-carboxamide from 5-amino-1-(5-phospho-D-ribosyl)imidazole-4-carboxylate: step 2/2. Its pathway is purine metabolism. Catalyzes two reactions in de novo purine nucleotide biosynthesis. Catalyzes the breakdown of 5-aminoimidazole- (N-succinylocarboxamide) ribotide (SAICAR or 2-[5-amino-1-(5-phospho-beta-D-ribosyl)imidazole-4-carboxamido]succinate) to 5-aminoimidazole-4-carboxamide ribotide (AICAR or 5-amino-1-(5-phospho-beta-D-ribosyl)imidazole-4-carboxamide) and fumarate, and of adenylosuccinate (ADS or N(6)-(1,2-dicarboxyethyl)-AMP) to adenosine monophosphate (AMP) and fumarate. Its function is as follows. (Microbial infection) Catalyzes the conversion of 2-amino-2'-deoxyadenylo-succinate to dZMP and fumarate, when the bacterium is infected by a phage that produces the substrate of this reaction, a step in the synthesis of dZTP (2-amino-2'-deoxyadenosine 5'-triphosphate), which is a nucleotide then used by the phage as a DNA polymerase substrate. The chain is Adenylosuccinate lyase from Vibrio cholerae serotype O1 (strain ATCC 39541 / Classical Ogawa 395 / O395).